The primary structure comprises 290 residues: Bifunctional protein FolD (290 aa).

Residues 165 to 167, S190, and I231 each bind NADP(+); that span reads GRS.

This sequence belongs to the tetrahydrofolate dehydrogenase/cyclohydrolase family. In terms of assembly, homodimer.

It carries out the reaction (6R)-5,10-methylene-5,6,7,8-tetrahydrofolate + NADP(+) = (6R)-5,10-methenyltetrahydrofolate + NADPH. It catalyses the reaction (6R)-5,10-methenyltetrahydrofolate + H2O = (6R)-10-formyltetrahydrofolate + H(+). It participates in one-carbon metabolism; tetrahydrofolate interconversion. Catalyzes the oxidation of 5,10-methylenetetrahydrofolate to 5,10-methenyltetrahydrofolate and then the hydrolysis of 5,10-methenyltetrahydrofolate to 10-formyltetrahydrofolate. This Aromatoleum aromaticum (strain DSM 19018 / LMG 30748 / EbN1) (Azoarcus sp. (strain EbN1)) protein is Bifunctional protein FolD.